A 165-amino-acid chain; its full sequence is Large ribosomal subunit protein uL10 (165 aa).

This sequence belongs to the universal ribosomal protein uL10 family. Part of the ribosomal stalk of the 50S ribosomal subunit. The N-terminus interacts with L11 and the large rRNA to form the base of the stalk. The C-terminus forms an elongated spine to which L12 dimers bind in a sequential fashion forming a multimeric L10(L12)X complex.

Its function is as follows. Forms part of the ribosomal stalk, playing a central role in the interaction of the ribosome with GTP-bound translation factors. The sequence is that of Large ribosomal subunit protein uL10 from Mycoplasma capricolum subsp. capricolum (strain California kid / ATCC 27343 / NCTC 10154).